The following is a 575-amino-acid chain: MDVRFYPAAAGDPAGLDFAQCLGYYGYSKLGNNNYMNMAEANNAFFAASEQTFHTPSLGDEEFEIPPITPPPESDPTLGMPDALLPFQTLSDPLPSQGTEFTPQFPPQSLDLPSITISRNLVEQDGVLHSNGLHMDQSHTQVSQYRQDPSLVMRSIVHMTDGARSGIMPPAQLTTINQSQLSAQLGLNLGGANVSHTSPSPPASKSATPSPSSSINEEDADDANRAIGEKRTAPDSGKKPKTPKKKKKKDPNEPQKPVSAYALFFRDTQAAIKGQNPNATFGEVSKIVASMWDSLGEEQKQVYKRKTEAAKKEYLKALAAYRASLVSKAAAESAEAQTIRSVQQTLASTNLTSSLLLNTSLSQHGTVPASPQTLPQSLPRSIAPKPLTMRLPMSQIVTSVTIAANMPSNIGAPLISSMGTTMVGSATSTQVSPSVQTQQHQMQLQQQQQQQQQMQQMQQQQLQQHQMHQQIQQQMQQQHFQHHMQQHLQQQQQQHLQQQLSQQQLQQQLQQHLQLQQLQHMQHQSQPSPRQHSPVTSQITSPIPAIGSPQPASQQHQPQIQSQTQTQVLPQVSIF.

Disordered stretches follow at residues 189–258 (LGGA…QKPV) and 516–575 (QQLQ…VSIF). Over residues 195–214 (SHTSPSPPASKSATPSPSSS) the composition is skewed to low complexity. The span at 222 to 238 (DANRAIGEKRTAPDSGK) shows a compositional bias: basic and acidic residues. Positions 239–249 (KPKTPKKKKKK) are enriched in basic residues. A DNA-binding region (HMG box) is located at residues 254-322 (PQKPVSAYAL…EYLKALAAYR (69 aa)). Over residues 516-526 (QQLQHMQHQSQ) the composition is skewed to low complexity. Residues 527–541 (PSPRQHSPVTSQITS) show a composition bias toward polar residues. A compositionally biased stretch (low complexity) spans 548-575 (SPQPASQQHQPQIQSQTQTQVLPQVSIF).

In terms of assembly, homodimer. Interacts (via HGM box) with CITED1 (via C-terminus); the interaction increases estrogen-response element (ERE)-dependent transcription and protection against cell death. Interacts with CREB1 (phosphorylated form). Interacts with CREB1; the interaction is not depolarization dependent. Interacts with CREBBP (via C-terminus).

It localises to the nucleus. In terms of biological role, transcriptional coactivator of the p300/CBP-mediated transcription complex. Activates transactivation through cAMP response element (CRE) sites. Protects against cell death by inducing antiapoptotic and repressing pro-apoptotic transcripts. Stimulates transcription from the estrogen-responsive or BCL-2 promoters. Required for depolarization-induced transcription activation of the C-FOS promoter in neurons. Associates with chromatin to the estrogen-responsive C3 promoter region. The chain is TOX high mobility group box family member 3 (Tox3) from Mus musculus (Mouse).